Reading from the N-terminus, the 249-residue chain is Small ribosomal subunit protein uS2 (249 aa).

The protein belongs to the universal ribosomal protein uS2 family.

The polypeptide is Small ribosomal subunit protein uS2 (Listeria innocua serovar 6a (strain ATCC BAA-680 / CLIP 11262)).